Consider the following 351-residue polypeptide: MSDIMSNFSWLYGKPVATGKLKQLPEHFIVKEILGFEFTGNGEHLMVKIRKTGENTKYVANELAKFCGVKSKNVSWAGLKDRHAVTEQWLSVQVANSDELNFAKFEATHPGVEILEVTRHNKKLRPGDLQGNQFQVIATEVTDIDDVLARLEKVKLAGVPNYFGSQRFGHEGNNVNEARRWGRDNVRTRDNSKRSFYLSAARSWIFNHIVSQRITEGYFSQPVDGDILLDRNDRIVNENVTSEESIQKIQNGELSITAALAGDNQLPTTGTALTLEQPHLDAEPDLMALIRGNRMRHERRAIELHPENLTWSAEGDTLTLNFSLTSGSFATVIVRELLQEIEVERTYSSND.

The Nucleophile role is filled by D81. A TRUD domain is found at 158–304 (GVPNYFGSQR…MRHERRAIEL (147 aa)).

It belongs to the pseudouridine synthase TruD family.

The enzyme catalyses uridine(13) in tRNA = pseudouridine(13) in tRNA. Functionally, responsible for synthesis of pseudouridine from uracil-13 in transfer RNAs. The protein is tRNA pseudouridine synthase D of Aliivibrio fischeri (strain ATCC 700601 / ES114) (Vibrio fischeri).